Consider the following 414-residue polypeptide: Na(+)-translocating NADH-quinone reductase subunit B (414 aa).

Helical transmembrane passes span 23-40 (WFAL…PGLV), 56-76 (IMIM…YNAG), 129-149 (FLPI…LFCM), and 164-184 (ILFA…LGIT). T236 carries the FMN phosphoryl threonine modification. A run of 5 helical transmembrane segments spans residues 268 to 288 (IPGS…AMIV), 297 to 317 (IIAG…VVGS), 325 to 345 (MPWH…FMAT), 358 to 378 (WWYG…NPAY), and 381 to 401 (GMML…HVVI).

Belongs to the NqrB/RnfD family. In terms of assembly, composed of six subunits; NqrA, NqrB, NqrC, NqrD, NqrE and NqrF. FMN serves as cofactor.

The protein resides in the cell inner membrane. It carries out the reaction a ubiquinone + n Na(+)(in) + NADH + H(+) = a ubiquinol + n Na(+)(out) + NAD(+). In terms of biological role, NQR complex catalyzes the reduction of ubiquinone-1 to ubiquinol by two successive reactions, coupled with the transport of Na(+) ions from the cytoplasm to the periplasm. NqrA to NqrE are probably involved in the second step, the conversion of ubisemiquinone to ubiquinol. The polypeptide is Na(+)-translocating NADH-quinone reductase subunit B (Vibrio parahaemolyticus serotype O3:K6 (strain RIMD 2210633)).